The sequence spans 314 residues: Inactive chitinase-like protein 1 (314 aa).

A signal peptide spans 1 to 19 (MKEIVRALEGYGPPKDKAA). Positions 20–60 (EQCGWQAGGALCPGGLCCSQYGWCANTPEYCGSGCQSQCDG) constitute a Chitin-binding type-1 domain. Disulfide bonds link C22–C37, C31–C43, C36–C50, C54–C58, C92–C154, C166–C174, and C273–C305.

The protein belongs to the glycosyl hydrolase 19 family. Chitinase class I subfamily.

In terms of biological role, inactive chitinase-like protein that does not exhibit hydrolytic activity toward chitin. Binds strongly to chitin and possesses antifungal activity toward the fungal pathogen Altenaria alternata in plate assays. Inhibits the growth of Fusarium oxysporum on plate assays. Probably involved in defense against fungal pathogens through a mechanism that only involves carbohydrate binding. This Hevea brasiliensis (Para rubber tree) protein is Inactive chitinase-like protein 1.